A 456-amino-acid chain; its full sequence is Bifunctional protein GlmU (456 aa).

The interval 1–231 (MERTCLAIIL…EEELTGCNTR (231 aa)) is pyrophosphorylase. Residues 10–13 (LAAG), Lys-24, Gln-77, and 82–83 (GT) contribute to the UDP-N-acetyl-alpha-D-glucosamine site. Asp-107 lines the Mg(2+) pocket. The UDP-N-acetyl-alpha-D-glucosamine site is built by Gly-143, Glu-157, Asn-172, and Asn-229. Asn-229 provides a ligand contact to Mg(2+). Residues 232–252 (AELAYIERLWQQRRRQELMLA) are linker. Residues 253–456 (GVSMVAPETV…AARKKVKAAE (204 aa)) are N-acetyltransferase. 2 residues coordinate UDP-N-acetyl-alpha-D-glucosamine: Arg-318 and Lys-336. The active-site Proton acceptor is His-348. The UDP-N-acetyl-alpha-D-glucosamine site is built by Tyr-351 and Asn-362. Acetyl-CoA-binding positions include Ala-365, 371 to 372 (NY), Ser-390, Ser-408, and Arg-425.

In the N-terminal section; belongs to the N-acetylglucosamine-1-phosphate uridyltransferase family. It in the C-terminal section; belongs to the transferase hexapeptide repeat family. In terms of assembly, homotrimer. Requires Mg(2+) as cofactor.

The protein resides in the cytoplasm. The catalysed reaction is alpha-D-glucosamine 1-phosphate + acetyl-CoA = N-acetyl-alpha-D-glucosamine 1-phosphate + CoA + H(+). The enzyme catalyses N-acetyl-alpha-D-glucosamine 1-phosphate + UTP + H(+) = UDP-N-acetyl-alpha-D-glucosamine + diphosphate. It participates in nucleotide-sugar biosynthesis; UDP-N-acetyl-alpha-D-glucosamine biosynthesis; N-acetyl-alpha-D-glucosamine 1-phosphate from alpha-D-glucosamine 6-phosphate (route II): step 2/2. It functions in the pathway nucleotide-sugar biosynthesis; UDP-N-acetyl-alpha-D-glucosamine biosynthesis; UDP-N-acetyl-alpha-D-glucosamine from N-acetyl-alpha-D-glucosamine 1-phosphate: step 1/1. Its pathway is bacterial outer membrane biogenesis; LPS lipid A biosynthesis. Functionally, catalyzes the last two sequential reactions in the de novo biosynthetic pathway for UDP-N-acetylglucosamine (UDP-GlcNAc). The C-terminal domain catalyzes the transfer of acetyl group from acetyl coenzyme A to glucosamine-1-phosphate (GlcN-1-P) to produce N-acetylglucosamine-1-phosphate (GlcNAc-1-P), which is converted into UDP-GlcNAc by the transfer of uridine 5-monophosphate (from uridine 5-triphosphate), a reaction catalyzed by the N-terminal domain. The protein is Bifunctional protein GlmU of Sinorhizobium fredii (strain NBRC 101917 / NGR234).